The chain runs to 640 residues: Threonine--tRNA ligase (640 aa).

The TGS domain occupies 1-61; it reads MPIITLPDGS…ERDATLQIIT (61 aa). Residues 242 to 533 form a catalytic region; that stretch reads DHRRIGKQLD…LIEHYAGAFP (292 aa). The Zn(2+) site is built by C333, H384, and H510.

This sequence belongs to the class-II aminoacyl-tRNA synthetase family. As to quaternary structure, homodimer. Requires Zn(2+) as cofactor.

It is found in the cytoplasm. The catalysed reaction is tRNA(Thr) + L-threonine + ATP = L-threonyl-tRNA(Thr) + AMP + diphosphate + H(+). Functionally, catalyzes the attachment of threonine to tRNA(Thr) in a two-step reaction: L-threonine is first activated by ATP to form Thr-AMP and then transferred to the acceptor end of tRNA(Thr). Also edits incorrectly charged L-seryl-tRNA(Thr). The protein is Threonine--tRNA ligase of Pseudomonas paraeruginosa (strain DSM 24068 / PA7) (Pseudomonas aeruginosa (strain PA7)).